Reading from the N-terminus, the 505-residue chain is Protein disulfide-isomerase A3 (505 aa).

An N-terminal signal peptide occupies residues 1–24; sequence MRFSCLALLPGVALLLASALLASA. One can recognise a Thioredoxin 1 domain in the interval 25-133; that stretch reads SDVLELTDEN…IVSHLKKQAG (109 aa). Residues Cys-57 and Cys-60 each act as nucleophile in the active site. Cys-57 and Cys-60 are disulfide-bonded. Lys-61 bears the N6-methyllysine mark. Cys-85 and Cys-92 are disulfide-bonded. Lys-129 is subject to N6-succinyllysine. Lys-152 carries the post-translational modification N6-acetyllysine. An N6-succinyllysine modification is found at Lys-218. Lys-252 is subject to N6-acetyllysine. Residue Thr-319 is modified to Phosphothreonine. The Thioredoxin 2 domain occupies 343–485; the sequence is SRDGKALERF…FISYLQREAT (143 aa). Residue Lys-362 is modified to N6-acetyllysine. Catalysis depends on nucleophile residues Cys-406 and Cys-409. Cysteines 406 and 409 form a disulfide. Residues 484 to 505 are disordered; that stretch reads ATNPPIIQEEKPKKKKKAQEDL. Over residues 491 to 505 the composition is skewed to basic and acidic residues; sequence QEEKPKKKKKAQEDL. An N6-acetyllysine modification is found at Lys-494. Positions 502–505 match the Prevents secretion from ER motif; that stretch reads QEDL.

Belongs to the protein disulfide isomerase family. As to quaternary structure, part of the major histocompatibility complex class I (MHC I) peptide loading complex composed of TAP1, TAP2, B2M, MHC heavy chain, TAPBP, PDIA3, and CALR. Interacts with ERP27 and CANX. Interacts with SERPINA2 and with SERPINA1. Interacts with ATP2A2. Within the major histocompatibility complex class I (MHC I) peptide loading complex forms reversible disulfide-linked heterodimers with TAPBP as part of its protein folding chaperone activity. This is essential to assist the dynamic assembly of the MHC I complex with high affinity antigens in the endoplasmic reticulum. Post-translationally, phosphorylated. In terms of tissue distribution, in caput epididymal spermatozoa, detected in the head, mid and principal pieces. In cauda epididymal spermatozoa detected only in the acrosome (at protein level).

It is found in the endoplasmic reticulum. It localises to the endoplasmic reticulum lumen. Its subcellular location is the melanosome. The catalysed reaction is Catalyzes the rearrangement of -S-S- bonds in proteins.. With respect to regulation, seems to be inhibited by acidic phospholipids. In terms of biological role, protein disulfide isomerase that catalyzes the formation, isomerization, and reduction or oxidation of disulfide bonds in client proteins and functions as a protein folding chaperone. Core component of the major histocompatibility complex class I (MHC I) peptide loading complex where it functions as an essential folding chaperone for TAPBP. Through TAPBP, assists the dynamic assembly of the MHC I complex with high affinity antigens in the endoplasmic reticulum. Therefore, plays a crucial role in the presentation of antigens to cytotoxic T cells in adaptive immunity. In Rattus norvegicus (Rat), this protein is Protein disulfide-isomerase A3 (Pdia3).